The following is a 299-amino-acid chain: Coenzyme PQQ synthesis protein B (299 aa).

This sequence belongs to the PqqB family.

Its pathway is cofactor biosynthesis; pyrroloquinoline quinone biosynthesis. Its function is as follows. May be involved in the transport of PQQ or its precursor to the periplasm. The protein is Coenzyme PQQ synthesis protein B of Methylorubrum populi (strain ATCC BAA-705 / NCIMB 13946 / BJ001) (Methylobacterium populi).